A 123-amino-acid polypeptide reads, in one-letter code: Fluoride-specific ion channel FluC 2 (123 aa).

3 helical membrane-spanning segments follow: residues 30–50, 68–88, and 93–113; these read FPLP…FVAG, VGFI…VLLL, and WPLA…AVWV. Positions 72 and 75 each coordinate Na(+).

The protein belongs to the fluoride channel Fluc/FEX (TC 1.A.43) family.

It localises to the cell membrane. It carries out the reaction fluoride(in) = fluoride(out). Na(+) is not transported, but it plays an essential structural role and its presence is essential for fluoride channel function. In terms of biological role, fluoride-specific ion channel. Important for reducing fluoride concentration in the cell, thus reducing its toxicity. The chain is Fluoride-specific ion channel FluC 2 from Symbiobacterium thermophilum (strain DSM 24528 / JCM 14929 / IAM 14863 / T).